Here is a 343-residue protein sequence, read N- to C-terminus: WAT1-related protein At1g43650 (343 aa).

The next 10 helical transmembrane spans lie at Met-9–Ile-29, Phe-36–Phe-56, Leu-65–Leu-85, Thr-98–Phe-118, Gly-130–Val-150, Ser-175–Met-195, Leu-209–Asn-229, Phe-239–Trp-259, Phe-272–Phe-292, and Phe-296–Trp-316. 2 EamA domains span residues Ile-16–Val-139 and Cys-188–Leu-313.

The protein belongs to the drug/metabolite transporter (DMT) superfamily. Plant drug/metabolite exporter (P-DME) (TC 2.A.7.4) family.

The protein localises to the membrane. This chain is WAT1-related protein At1g43650, found in Arabidopsis thaliana (Mouse-ear cress).